The chain runs to 365 residues: UDP-N-acetylglucosamine--N-acetylmuramyl-(pentapeptide) pyrophosphoryl-undecaprenol N-acetylglucosamine transferase (365 aa).

UDP-N-acetyl-alpha-D-glucosamine is bound by residues 10 to 12, Asn-128, Arg-170, Ser-199, Ile-250, and Gln-295; that span reads TGG.

It belongs to the glycosyltransferase 28 family. MurG subfamily.

It is found in the cell inner membrane. The catalysed reaction is di-trans,octa-cis-undecaprenyl diphospho-N-acetyl-alpha-D-muramoyl-L-alanyl-D-glutamyl-meso-2,6-diaminopimeloyl-D-alanyl-D-alanine + UDP-N-acetyl-alpha-D-glucosamine = di-trans,octa-cis-undecaprenyl diphospho-[N-acetyl-alpha-D-glucosaminyl-(1-&gt;4)]-N-acetyl-alpha-D-muramoyl-L-alanyl-D-glutamyl-meso-2,6-diaminopimeloyl-D-alanyl-D-alanine + UDP + H(+). Its pathway is cell wall biogenesis; peptidoglycan biosynthesis. Functionally, cell wall formation. Catalyzes the transfer of a GlcNAc subunit on undecaprenyl-pyrophosphoryl-MurNAc-pentapeptide (lipid intermediate I) to form undecaprenyl-pyrophosphoryl-MurNAc-(pentapeptide)GlcNAc (lipid intermediate II). The protein is UDP-N-acetylglucosamine--N-acetylmuramyl-(pentapeptide) pyrophosphoryl-undecaprenol N-acetylglucosamine transferase of Prosthecochloris aestuarii (strain DSM 271 / SK 413).